The sequence spans 220 residues: Superoxide dismutase [Fe] (220 aa).

Residues His-26, His-73, Asp-164, and His-168 each coordinate Fe cation.

The protein belongs to the iron/manganese superoxide dismutase family. As to quaternary structure, homodimer. The cofactor is Fe cation.

It catalyses the reaction 2 superoxide + 2 H(+) = H2O2 + O2. Destroys superoxide anion radicals which are normally produced within the cells and which are toxic to biological systems. The chain is Superoxide dismutase [Fe] (sodB) from Campylobacter coli.